Consider the following 325-residue polypeptide: NADH-quinone oxidoreductase subunit H (325 aa).

8 consecutive transmembrane segments (helical) span residues 11 to 31, 81 to 101, 114 to 134, 154 to 174, 186 to 206, 237 to 257, 265 to 285, and 304 to 324; these read ILLT…CGAF, FIFT…FAIV, IGIL…LFAG, VSYE…AGSF, MWNI…GVAV, FFVG…TLFF, LPSF…FILI, and ICLP…LYNA.

It belongs to the complex I subunit 1 family. NDH-1 is composed of 13 different subunits. Subunits NuoA, H, J, K, L, M, N constitute the membrane sector of the complex.

It is found in the cell inner membrane. It catalyses the reaction a quinone + NADH + 5 H(+)(in) = a quinol + NAD(+) + 4 H(+)(out). In terms of biological role, NDH-1 shuttles electrons from NADH, via FMN and iron-sulfur (Fe-S) centers, to quinones in the respiratory chain. The immediate electron acceptor for the enzyme in this species is believed to be ubiquinone. Couples the redox reaction to proton translocation (for every two electrons transferred, four hydrogen ions are translocated across the cytoplasmic membrane), and thus conserves the redox energy in a proton gradient. This subunit may bind ubiquinone. This chain is NADH-quinone oxidoreductase subunit H, found in Proteus mirabilis (strain HI4320).